Consider the following 165-residue polypeptide: uncharacterized protein (165 aa).

A run of 2 helical transmembrane segments spans residues Leu7–Val27 and Lys141–Leu161.

It localises to the cell membrane. This is an uncharacterized protein from Archaeoglobus fulgidus (strain ATCC 49558 / DSM 4304 / JCM 9628 / NBRC 100126 / VC-16).